The chain runs to 257 residues: Transcription factor GHD7 (257 aa).

Ser-68 carries the post-translational modification Phosphoserine; by CK1. In terms of domain architecture, CCT spans 190 to 232; that stretch reads REAKLMRYKEKRKKRCYEKQIRYASRKAYAEMRPRVRGRFAKE. Residues 198–204 carry the Nuclear localization signal motif; that stretch reads KEKRKKR. The tract at residues 226–245 is disordered; it reads RGRFAKEPDQEAVAPPSTYV.

As to quaternary structure, interacts with HD16/EL1. Post-translationally, phosphorylated at Ser-68 by HD16/EL1, a casein kinase 1. In terms of tissue distribution, expressed in the apical meristem, developing leaves, leaf sheaths of young seedling, root meristem, epidermal layer of developing stems and branch-primordia of developing panicles.

It localises to the nucleus. In terms of biological role, probable transcription factor involved in the regulation of flowering time under long day (LD) conditions. Plays a major role as repressor of flowering. Controls flowering time by negatively regulating the expression of EHD1 and HD3A. The chain is Transcription factor GHD7 from Oryza sativa subsp. japonica (Rice).